Reading from the N-terminus, the 239-residue chain is Orotidine 5'-phosphate decarboxylase (239 aa).

Substrate contacts are provided by residues aspartate 11, lysine 33, 60-69 (DLKFHDIPTT), threonine 117, arginine 178, glutamine 187, glycine 207, and arginine 208. Lysine 62 (proton donor) is an active-site residue.

The protein belongs to the OMP decarboxylase family. Type 1 subfamily. In terms of assembly, homodimer.

It catalyses the reaction orotidine 5'-phosphate + H(+) = UMP + CO2. The protein operates within pyrimidine metabolism; UMP biosynthesis via de novo pathway; UMP from orotate: step 2/2. In terms of biological role, catalyzes the decarboxylation of orotidine 5'-monophosphate (OMP) to uridine 5'-monophosphate (UMP). In Nitrosospira multiformis (strain ATCC 25196 / NCIMB 11849 / C 71), this protein is Orotidine 5'-phosphate decarboxylase.